Reading from the N-terminus, the 53-residue chain is Large ribosomal subunit protein bL33 (53 aa).

Belongs to the bacterial ribosomal protein bL33 family.

The polypeptide is Large ribosomal subunit protein bL33 (Blochmanniella floridana).